The following is a 395-amino-acid chain: MHIAQELADETCNSPRGAGHARLRYPSDRRTAIPRNRRPLEGLWRFRRVRDIDLQVKEGEFICFLGPSGCGKTTLLRAIAGLDIQSRGTICQGGQDISRLPPAQRDYGIVFQSYALFPNLTIEKNIAFGLENIGRPRREIASRVSELLELVGLSSQGRKYPAQLSGGQQQRVALARAMAISPGLLLLDEPLSALDAKVRVHLRHEIKELQRKLGVTTIMVTHDQEEALAMADRIVVMNQGGIEQVGTPTEIYRHPKTLFVADFIGETNQFPATVGKGAQVEIGHTRFACAEHRLPSGASVVAAVRPADIIPHGAAAHRATGLDAVGNADNLIDAHVEDMEFLGMFWRTRLSAPRLKEKALVADFSTNAVRRLSIEIGSAIQVEIPQERLLLFAKA.

A disordered region spans residues 1–21 (MHIAQELADETCNSPRGAGHA). The ABC transporter domain occupies 23 to 264 (LRYPSDRRTA…PKTLFVADFI (242 aa)). ATP is bound at residue 66 to 73 (GPSGCGKT).

This sequence belongs to the ABC transporter superfamily. Fe(3+) ion importer (TC 3.A.1.10) family. As to quaternary structure, the complex is composed of two ATP-binding proteins (FbpC), two transmembrane proteins (FbpB) and a solute-binding protein (FbpA).

The protein resides in the cell inner membrane. It catalyses the reaction Fe(3+)(out) + ATP + H2O = Fe(3+)(in) + ADP + phosphate + H(+). In terms of biological role, part of the ABC transporter complex FbpABC involved in Fe(3+) ions import. Responsible for energy coupling to the transport system. The protein is Fe(3+) ions import ATP-binding protein FbpC 2 of Rhizobium meliloti (strain 1021) (Ensifer meliloti).